Reading from the N-terminus, the 232-residue chain is E3 ubiquitin-protein ligase RNF125 (232 aa).

A compositionally biased stretch (polar residues) spans 1–10 (MGSVLSSDSG). The segment at 1-27 (MGSVLSSDSGKSAPPSATPRALERRGD) is disordered. Gly-2 carries the N-myristoyl glycine lipid modification. Zn(2+) is bound by residues Cys-37 and Cys-40. Residues 37 to 76 (CAVCLEVLHQPVRTRCGHVFCRSCIATSLKNNKWTCPYCR) form an RING-type zinc finger. The segment at 43 to 45 (VLH) is interaction with the C2HC RNF-type zinc finger. Cys-52, His-54, Cys-57, Cys-60, Cys-72, Cys-75, Cys-100, and Cys-103 together coordinate Zn(2+). The segment at 100 to 119 (CAECDTLVCLGEMRAHIRTC) adopts a C2HC RNF-type zinc-finger fold. An interaction with the RING-type zinc finger region spans residues 109–113 (LGEMR). Positions 115 and 119 each coordinate Zn(2+). Residues 120-128 (QKYIDKYGP) are linker region. The segment at 210 to 224 (EEALIRRVLDRSLLE) is required for interaction with ubiquitin and for autoubiquitination.

As to quaternary structure, interacts with UBE2D1. Interacts with VCP/p97; leading to recruit RNF125 to RIGI and promote ubiquitination of RIGI. Post-translationally, autoubiquitinated, leading to its subsequent proteasomal degradation.

Its subcellular location is the golgi apparatus membrane. It carries out the reaction S-ubiquitinyl-[E2 ubiquitin-conjugating enzyme]-L-cysteine + [acceptor protein]-L-lysine = [E2 ubiquitin-conjugating enzyme]-L-cysteine + N(6)-ubiquitinyl-[acceptor protein]-L-lysine.. The protein operates within protein modification; protein ubiquitination. Its function is as follows. E3 ubiquitin-protein ligase that mediates ubiquitination and subsequent proteasomal degradation of target proteins, such as RIGI, MAVS/IPS1, IFIH1/MDA5, JAK1 and p53/TP53. Acts as a negative regulator of type I interferon production by mediating ubiquitination of RIGI at 'Lys-181', leading to RIGI degradation. Mediates ubiquitination and subsequent degradation of p53/TP53. Mediates ubiquitination and subsequent degradation of JAK1. Acts as a positive regulator of T-cell activation. This is E3 ubiquitin-protein ligase RNF125 (RNF125) from Macaca fascicularis (Crab-eating macaque).